The chain runs to 423 residues: Serine--tRNA ligase (423 aa).

An L-serine-binding site is contributed by 230 to 232; the sequence is TAE. 261-263 is an ATP binding site; the sequence is RQE. Residue glutamate 284 participates in L-serine binding. 348–351 provides a ligand contact to ATP; sequence EISS. An L-serine-binding site is contributed by serine 384.

This sequence belongs to the class-II aminoacyl-tRNA synthetase family. Type-1 seryl-tRNA synthetase subfamily. Homodimer. The tRNA molecule binds across the dimer.

The protein resides in the cytoplasm. The catalysed reaction is tRNA(Ser) + L-serine + ATP = L-seryl-tRNA(Ser) + AMP + diphosphate + H(+). It carries out the reaction tRNA(Sec) + L-serine + ATP = L-seryl-tRNA(Sec) + AMP + diphosphate + H(+). It participates in aminoacyl-tRNA biosynthesis; selenocysteinyl-tRNA(Sec) biosynthesis; L-seryl-tRNA(Sec) from L-serine and tRNA(Sec): step 1/1. Functionally, catalyzes the attachment of serine to tRNA(Ser). Is also able to aminoacylate tRNA(Sec) with serine, to form the misacylated tRNA L-seryl-tRNA(Sec), which will be further converted into selenocysteinyl-tRNA(Sec). The polypeptide is Serine--tRNA ligase (Thermoanaerobacter pseudethanolicus (strain ATCC 33223 / 39E) (Clostridium thermohydrosulfuricum)).